The chain runs to 163 residues: ADP-ribosylation factor-like protein 2-binding protein (163 aa).

The protein belongs to the ARL2BP family. In terms of assembly, found in a complex with ARL2BP, ARL2 and SLC25A6. Found in a complex with ARL2, ARL2BP and SLC25A4. Interacts with STAT2, STAT3 and STAT4. Interacts with GTP-bound ARL2 and ARL3; the complex ARL2-ARL2BP as well as ARL2BP alone, binds to SLC25A4. Interaction with ARL2 may be required for targeting to cilia basal body. Interacts with STAT3; interaction is enhanced with ARL2. Expressed in retina pigment epithelial cells (at protein level). Widely expressed.

Its subcellular location is the cytoplasm. The protein localises to the mitochondrion intermembrane space. It is found in the cytoskeleton. The protein resides in the microtubule organizing center. It localises to the centrosome. Its subcellular location is the nucleus. The protein localises to the spindle. It is found in the cilium basal body. Together with ARL2, plays a role in the nuclear translocation, retention and transcriptional activity of STAT3. May play a role as an effector of ARL2. The chain is ADP-ribosylation factor-like protein 2-binding protein (ARL2BP) from Homo sapiens (Human).